The primary structure comprises 219 residues: Ribosome hibernation promotion factor (219 aa).

Belongs to the HPF/YfiA ribosome-associated protein family. Long HPF subfamily. As to quaternary structure, interacts with 100S ribosomes.

The protein resides in the cytoplasm. Functionally, required for dimerization of active 70S ribosomes into 100S ribosomes in stationary phase; 100S ribosomes are translationally inactive and sometimes present during exponential growth. The polypeptide is Ribosome hibernation promotion factor (Mycobacterium tuberculosis (strain ATCC 25618 / H37Rv)).